A 69-amino-acid polypeptide reads, in one-letter code: DNA-directed RNA polymerase subunit omega (69 aa).

It belongs to the RNA polymerase subunit omega family. In terms of assembly, the RNAP catalytic core consists of 2 alpha, 1 beta, 1 beta' and 1 omega subunit. When a sigma factor is associated with the core the holoenzyme is formed, which can initiate transcription.

It catalyses the reaction RNA(n) + a ribonucleoside 5'-triphosphate = RNA(n+1) + diphosphate. Its function is as follows. Promotes RNA polymerase assembly. Latches the N- and C-terminal regions of the beta' subunit thereby facilitating its interaction with the beta and alpha subunits. This is DNA-directed RNA polymerase subunit omega from Exiguobacterium sp. (strain ATCC BAA-1283 / AT1b).